A 485-amino-acid chain; its full sequence is Isocitrate dehydrogenase [NADP], chloroplastic/mitochondrial (485 aa).

A chloroplast and mitochondrion-targeting transit peptide spans methionine 1–arginine 65. NADP(+) is bound by residues threonine 147–threonine 149 and arginine 154. Threonine 149 contacts substrate. Substrate contacts are provided by residues serine 166–arginine 172, arginine 181, and arginine 204. Aspartate 323 is a Mn(2+) binding site. Position 331 (lysine 331) interacts with NADP(+). Aspartate 346 contributes to the Mn(2+) binding site. NADP(+) contacts are provided by residues glycine 381–histidine 386 and asparagine 399.

The protein belongs to the isocitrate and isopropylmalate dehydrogenases family. Mg(2+) is required as a cofactor. The cofactor is Mn(2+).

It localises to the plastid. It is found in the chloroplast. The protein localises to the mitochondrion. It catalyses the reaction D-threo-isocitrate + NADP(+) = 2-oxoglutarate + CO2 + NADPH. Functionally, may be involved in response to oxidative stresses. The chain is Isocitrate dehydrogenase [NADP], chloroplastic/mitochondrial from Arabidopsis thaliana (Mouse-ear cress).